The primary structure comprises 245 residues: 1-(5-phosphoribosyl)-5-[(5-phosphoribosylamino)methylideneamino] imidazole-4-carboxamide isomerase (245 aa).

The active-site Proton acceptor is Asp-8. Asp-131 functions as the Proton donor in the catalytic mechanism.

The protein belongs to the HisA/HisF family.

Its subcellular location is the cytoplasm. It catalyses the reaction 1-(5-phospho-beta-D-ribosyl)-5-[(5-phospho-beta-D-ribosylamino)methylideneamino]imidazole-4-carboxamide = 5-[(5-phospho-1-deoxy-D-ribulos-1-ylimino)methylamino]-1-(5-phospho-beta-D-ribosyl)imidazole-4-carboxamide. It functions in the pathway amino-acid biosynthesis; L-histidine biosynthesis; L-histidine from 5-phospho-alpha-D-ribose 1-diphosphate: step 4/9. This Neisseria gonorrhoeae (strain NCCP11945) protein is 1-(5-phosphoribosyl)-5-[(5-phosphoribosylamino)methylideneamino] imidazole-4-carboxamide isomerase.